Reading from the N-terminus, the 912-residue chain is Protein translocase subunit SecA (912 aa).

Residues glutamine 87, glycine 105–threonine 109, and aspartate 512 each bind ATP. Zn(2+)-binding residues include cysteine 896, cysteine 898, cysteine 907, and histidine 908.

Belongs to the SecA family. Monomer and homodimer. Part of the essential Sec protein translocation apparatus which comprises SecA, SecYEG and auxiliary proteins SecDF-YajC and YidC. The cofactor is Zn(2+).

The protein resides in the cell inner membrane. The protein localises to the cytoplasm. It catalyses the reaction ATP + H2O + cellular proteinSide 1 = ADP + phosphate + cellular proteinSide 2.. Its function is as follows. Part of the Sec protein translocase complex. Interacts with the SecYEG preprotein conducting channel. Has a central role in coupling the hydrolysis of ATP to the transfer of proteins into and across the cell membrane, serving both as a receptor for the preprotein-SecB complex and as an ATP-driven molecular motor driving the stepwise translocation of polypeptide chains across the membrane. This Pseudomonas fluorescens (strain Pf0-1) protein is Protein translocase subunit SecA.